A 370-amino-acid chain; its full sequence is Peptidyl-prolyl cis-trans isomerase D (370 aa).

Ser-5 bears the Phosphoserine mark. The PPIase cyclophilin-type domain maps to 19–183 (FFDVDIGGER…KLCVIAECGE (165 aa)). Lys-171 carries the N6-acetyllysine modification. The segment at 185 to 215 (KEGDEWGIFPKDGSGDSHPDFPEDADIDLKD) is chaperone activity. Position 198 is a phosphoserine (Ser-198). Residues 214–370 (KDVDKILLIS…EKAVYAKMFA (157 aa)) are interaction with HSP90AB1. TPR repeat units follow at residues 223 to 256 (SEDLKNIGNTFFKSQNWEMAIKKYAKVLRYLDSS), 273 to 306 (LSCVLNIGACKLKMSNWQGAIDSCLEALEMDPSN), and 308 to 340 (KALYRKAQGWQGLKEYDQALADLKKAQEIAPGD).

Belongs to the cyclophilin-type PPIase family. PPIase D subfamily. As to quaternary structure, identified in ESR1 or NR3C1/GCR steroid receptor-chaperone complexes. Found in HSP90 chaperone complexes with kinase clients LCK or EIF2AK1. Two monomers associate with one HSP90 homodimer. Interacts with HSP90AA1. Interacts with HSP90AB1; PPID and FKBP4 compete for binding to HSP90AB1 and the interaction is mutually exclusive with the PPID:HSPA8 interaction. Interacts with HSPA8; PPID and STIP1 but not FKBP4 compete for binding to HSPA8 and the interaction is mutually exclusive with the PPID:HSP90AB1 interaction. Interacts with S100A1 and S100A2; the interactions dissociate the PPID:HSP90AA1 interaction. Interacts with S100A6. Interacts with MYB, ILF2, XRCC6, RACK1 and RPS3. Interacts with cytoplasmic dynein 1 intermediate chain (DYNC1I1 or DYNC1I2).

Its subcellular location is the cytoplasm. The protein resides in the nucleus. It is found in the nucleolus. The protein localises to the nucleoplasm. It catalyses the reaction [protein]-peptidylproline (omega=180) = [protein]-peptidylproline (omega=0). Its activity is regulated as follows. Less sensitive to inhibition by cyclosporin A than is CYP-18. PPIase that catalyzes the cis-trans isomerization of proline imidic peptide bonds in oligopeptides and may therefore assist protein folding. Proposed to act as a co-chaperone in HSP90 complexes such as in unligated steroid receptors heterocomplexes. Different co-chaperones seem to compete for association with HSP90 thus establishing distinct HSP90-co-chaperone-receptor complexes with the potential to exert tissue-specific receptor activity control. May have a preference for estrogen receptor complexes and is not found in glucocorticoid receptor complexes. May be involved in cytoplasmic dynein-dependent movement of the receptor from the cytoplasm to the nucleus. May regulate MYB by inhibiting its DNA-binding activity. Involved in regulation of AHR signaling by promoting the formation of the AHR:ARNT dimer; the function is independent of HSP90 but requires the chaperone activity region. Involved in regulation of UV radiation-induced apoptosis. The sequence is that of Peptidyl-prolyl cis-trans isomerase D from Rattus norvegicus (Rat).